The following is a 414-amino-acid chain: Esterase FrsA (414 aa).

This sequence belongs to the FrsA family.

It catalyses the reaction a carboxylic ester + H2O = an alcohol + a carboxylate + H(+). Catalyzes the hydrolysis of esters. This is Esterase FrsA from Salmonella typhi.